An 87-amino-acid polypeptide reads, in one-letter code: Putative outer membrane protein ArbH (87 aa).

A signal peptide spans Met1–Ala23.

The protein belongs to the porin LamB (TC 1.B.3) family.

Its subcellular location is the cell outer membrane. Functionally, may be a sugar porin with a broad carbohydrate specificity. This is Putative outer membrane protein ArbH (arbH) from Dickeya chrysanthemi (Pectobacterium chrysanthemi).